A 510-amino-acid chain; its full sequence is Serine/threonine protein phosphatase 2A 59 kDa regulatory subunit B' eta isoform (510 aa).

The disordered stretch occupies residues 1 to 87 (MWKQILSKLP…NNNNNNNNGV (87 aa)). The segment covering 10–19 (PNKKSSKHEH) has biased composition (basic residues). Over residues 27 to 42 (HSSSSSHTSGASTSKS) the composition is skewed to low complexity.

It belongs to the phosphatase 2A regulatory subunit B56 family. PP2A consists of a common heteromeric enzyme, composed of a catalytic subunit (subunits C), a constant regulatory subunit (subunit A), and a variety of regulatory subunits such as subunits B (the R2/B/PR55/B55, R3/B''/PR72/PR130/PR59 and R5/B'/B56 families). Interacts with BZR1. Interacts with BRI1.

The protein localises to the nucleus. Its subcellular location is the nucleolus. It is found in the cytoplasm. The B regulatory subunit may modulate substrate selectivity and catalytic activity, and may also direct the localization of the catalytic enzyme to a particular subcellular compartment. The holoenzyme composed of PP2AA1, PP2A4 and B'ETA acts as negative regulator of plant innate immunity by controlling BAK1 phosphorylation state and activation in surface-localized immune receptor complexes. Required for the formation of the PP2A holoenzyme that negatively regulates brassinosteroid signaling by dephosphorylating and inactivating BRI1 in the cytoplasm. This chain is Serine/threonine protein phosphatase 2A 59 kDa regulatory subunit B' eta isoform (B'ETA), found in Arabidopsis thaliana (Mouse-ear cress).